Reading from the N-terminus, the 926-residue chain is G-protein coupled receptor family C group 6 member A (926 aa).

An N-terminal signal peptide occupies residues 1-18 (MAFLIILITCFVIILATS). The Extracellular portion of the chain corresponds to 19–594 (QPCQTPDDFV…EYLNWNDSLA (576 aa)). 8 N-linked (GlcNAc...) asparagine glycosylation sites follow: Asn-121, Asn-259, Asn-332, Asn-378, Asn-452, Asn-555, Asn-567, and Asn-590. The chain crosses the membrane as a helical span at residues 595–615 (ILLLILSLLGIIFVLVVGIIF). Topologically, residues 616–631 (TRNLNTPVVKSSGGLR) are cytoplasmic. Residues 632–652 (VCYVILLCHFLNFASTSFFIG) traverse the membrane as a helical segment. At 653-669 (EPQDFTCKTRQTMFGVS) the chain is on the extracellular side. A helical transmembrane segment spans residues 670–690 (FTLCISCILTKSLKILLAFSF). Residues 691–704 (DPKLQKFLKCLYRP) are Cytoplasmic-facing. The chain crosses the membrane as a helical span at residues 705 to 725 (ILIIFTCTGIQVVICTLWLIF). Topologically, residues 726 to 748 (AAPTVEVNVSLPRVIILECEEGS) are extracellular. Asn-733 carries an N-linked (GlcNAc...) asparagine glycan. The chain crosses the membrane as a helical span at residues 749–769 (ILAFGTMLGYIAILAFICFIF). At 770-782 (AFKGKYENYNEAK) the chain is on the cytoplasmic side. The helical transmembrane segment at 783–803 (FITFGMLIYFIAWITFIPIYA) threads the bilayer. At 804–810 (TTFGKYV) the chain is on the extracellular side. Residues 811–831 (PAVEIIVILISNYGILYCTFI) form a helical membrane-spanning segment. Topologically, residues 832 to 926 (PKCYVIICKQ…TLPRKRMSSI (95 aa)) are cytoplasmic.

Belongs to the G-protein coupled receptor 3 family. As to quaternary structure, homodimer; disulfide-linked. Isoform 1 is expressed at high level in brain, skeletal muscle, testis, bone, calvaria, osteoblasts and leukocytes. Expressed at intermediate level in liver, heart, kidney and spleen. Expressed at low level in lung, pancreas, placenta and ovary. Not detected in thymus, prostate, small intestine, tongue and colon. Isoform 1 and isoform 2 are expressed in kidney at the same level. Isoform 2 is expressed at lower level than isoform 1 in the other tissues.

The protein resides in the cell membrane. Its function is as follows. Receptor activated by multiple ligands, including osteocalcin (BGLAP), basic amino acids, and various cations. Activated by amino acids with a preference for basic amino acids such as L-Lys, L-Arg and L-ornithine but also by small and polar amino acids. The L-alpha amino acids respond is augmented by divalent cations Ca(2+) and Mg(2+). Seems to act through a G(q)/G(11) and G(i)-coupled pathway. Regulates testosterone production by acting as a ligand for uncarboxylated osteocalcin hormone: osteocalcin-binding at the surface of Leydig cells initiates a signaling response that promotes the expression of enzymes required for testosterone synthesis in a CREB-dependent manner. Mediates the non-genomic effects of androgens in multiple tissue. May coordinate nutritional and hormonal anabolic signals through the sensing of extracellular amino acids, osteocalcin, divalent ions and its responsiveness to anabolic steroids. This chain is G-protein coupled receptor family C group 6 member A (GPRC6A), found in Homo sapiens (Human).